A 135-amino-acid chain; its full sequence is HTH-type transcriptional regulator DicA (135 aa).

Residues 12–66 form the HTH cro/C1-type domain; the sequence is IRYRRKNLKHTQRSLAKALKISHVSVSQWERGDSEPTGKNLFALSKVLQCSPTWI. Residues 23 to 42 constitute a DNA-binding region (H-T-H motif); the sequence is QRSLAKALKISHVSVSQWER.

Functionally, this protein is a repressor of division inhibition gene dicB. In Escherichia coli (strain K12), this protein is HTH-type transcriptional regulator DicA (dicA).